The primary structure comprises 338 residues: Trace amine-associated receptor 9 (338 aa).

The Extracellular portion of the chain corresponds to 1–23 (MELCYENVNGSCIKSSYSPWPRA). N-linked (GlcNAc...) asparagine glycosylation is present at N9. Cystine bridges form between C12–C176 and C95–C180. Residues 24 to 48 (ILYAVLGLGALLAVFGNLLVITAIL) form a helical membrane-spanning segment. Topologically, residues 49-58 (HFKQLHTPTN) are cytoplasmic. Residues 59 to 80 (FLVASLACADFLVGVTVMPFST) traverse the membrane as a helical segment. The Extracellular segment spans residues 81-95 (VRSVEGCWYFGDTYC). A helical membrane pass occupies residues 96 to 118 (KFHTCFDTSFCFASLFHLCCISI). The spermidine site is built by D102 and T103. At 119–138 (DRYVAVTDPLTYPTKFTISV) the chain is on the cytoplasmic side. Residues 139 to 160 (SGVCIALSWFFSVTYSFSIFYT) form a helical membrane-spanning segment. At 161-186 (GANEEGIEELVVALTCVGGCQAPLNQ) the chain is on the extracellular side. Positions 164–177 (EEGIEELVVALTCV) are extracellular Loop 2 (ECL2). Residues 187–208 (NWVLLCFLLFFLPTVVMVFLYG) traverse the membrane as a helical segment. Over 209 to 246 (RIFLVAKQQARKIEGSANQPQASSESYKERVARRERKA) the chain is Cytoplasmic. Residues 247–270 (AKTLGIAMAAFLVSWLPYIIDAVI) traverse the membrane as a helical segment. Over 271 to 283 (DAYMNFITPAYVY) the chain is Extracellular. Residues 284 to 304 (EILVWCVYYNSAMNPLIYAFF) form a helical membrane-spanning segment. The Cytoplasmic segment spans residues 305–338 (YPWFRKAIKLIVSGKVFRADSSRTNLFSEEAGAG).

This sequence belongs to the G-protein coupled receptor 1 family. Mainly expressed in neurons of the olfactory epithelium. Also expressed in the intestine.

The protein resides in the cell membrane. In terms of biological role, olfactory receptor specific for trace amines, such as triethylamine, N-methylpiperidine, N,N-dimethylcyclohexylamine (DMCHA), beta-phenylethylamine (beta-PEA), cadaverine (CAD) and polyamines such as spermidine. Trace amine compounds are enriched in animal body fluids and act on trace amine-associated receptors (TAARs) to elicit both intraspecific and interspecific innate behaviors. Trace amine-binding causes a conformation change that triggers signaling via G(s)-class of G alpha proteins (GNAL or GNAS). In mature olfactory sensory neurons, Taar9 is coupled with GNAL/G(olf)G alpha protein and mediates activation of adenylate cyclase activity to activate cAMP signaling and eventually transmit odorant signals to achieve membrane depolarization. In immature olfactory sensory neurons, Taar9 is coupled with GNAS/G(s) G alpha proteins. The polypeptide is Trace amine-associated receptor 9 (Rattus norvegicus (Rat)).